An 856-amino-acid polypeptide reads, in one-letter code: TPR repeat-containing protein TP_0123 (856 aa).

TPR repeat units follow at residues 107 to 140, 523 to 556, and 603 to 636; these read YAAV…VADD, YRTF…AEQL, and TVSL…ALQY.

In Treponema pallidum (strain Nichols), this protein is TPR repeat-containing protein TP_0123.